The chain runs to 142 residues: MVLSPTDKSNVKAAWEKVGAHAGDYGAEALERMFLSFPTTKTYFPHFDLSHGSTQVKGHGKKVADALTNAVLHVDDMPSALSALSDLHAHKLRVDPVNFKLLRHCLLVTLACHHPAEFTPAVHASLDKFMASVSTVLTSKYR.

The 141-residue stretch at 2–142 folds into the Globin domain; that stretch reads VLSPTDKSNV…VSTVLTSKYR (141 aa). O2 is bound at residue H59. H88 provides a ligand contact to heme b.

It belongs to the globin family. As to quaternary structure, heterotetramer of two alpha chains and two beta chains. Red blood cells.

Involved in oxygen transport from the lung to the various peripheral tissues. This chain is Hemoglobin subunit alpha-B (HBAB), found in Otolemur crassicaudatus (Brown greater galago).